Reading from the N-terminus, the 831-residue chain is Serine/threonine-protein kinase ATG1 (831 aa).

The Protein kinase domain occupies Tyr-21 to Val-321. ATP-binding positions include Ile-27 to Val-35 and Lys-50. The active-site Proton acceptor is the Asp-168. 2 stretches are compositionally biased toward polar residues: residues Gln-360–Arg-382 and Asn-405–Lys-419. Residues Gln-360–Lys-419 are disordered.

This sequence belongs to the protein kinase superfamily. Ser/Thr protein kinase family. APG1/unc-51/ULK1 subfamily. As to quaternary structure, homodimer. Forms a ternary complex with ATG13 and ATG17.

The protein localises to the cytoplasm. The protein resides in the preautophagosomal structure membrane. It carries out the reaction L-seryl-[protein] + ATP = O-phospho-L-seryl-[protein] + ADP + H(+). The enzyme catalyses L-threonyl-[protein] + ATP = O-phospho-L-threonyl-[protein] + ADP + H(+). Functionally, serine/threonine protein kinase involved in the cytoplasm to vacuole transport (Cvt) and found to be essential in autophagy, where it is required for the formation of autophagosomes. Involved in the clearance of protein aggregates which cannot be efficiently cleared by the proteasome. Required for selective autophagic degradation of the nucleus (nucleophagy) as well as for mitophagy which contributes to regulate mitochondrial quantity and quality by eliminating the mitochondria to a basal level to fulfill cellular energy requirements and preventing excess ROS production. Also involved in endoplasmic reticulum-specific autophagic process, in selective removal of ER-associated degradation (ERAD) substrates. Plays a key role in ATG9 and ATG23 cycling through the pre-autophagosomal structure and is necessary to promote ATG18 binding to ATG9 through phosphorylation of ATG9. Catalyzes phosphorylation of ATG4, decreasing the interaction between ATG4 and ATG8 and impairing deconjugation of PE-conjugated forms of ATG8. The polypeptide is Serine/threonine-protein kinase ATG1 (Kluyveromyces lactis (strain ATCC 8585 / CBS 2359 / DSM 70799 / NBRC 1267 / NRRL Y-1140 / WM37) (Yeast)).